We begin with the raw amino-acid sequence, 199 residues long: Peptidyl-tRNA hydrolase (199 aa).

Position 18 (Tyr-18) interacts with tRNA. Catalysis depends on His-23, which acts as the Proton acceptor. The tRNA site is built by Tyr-72, Asn-74, and Asn-120.

This sequence belongs to the PTH family. Monomer.

Its subcellular location is the cytoplasm. The enzyme catalyses an N-acyl-L-alpha-aminoacyl-tRNA + H2O = an N-acyl-L-amino acid + a tRNA + H(+). Hydrolyzes ribosome-free peptidyl-tRNAs (with 1 or more amino acids incorporated), which drop off the ribosome during protein synthesis, or as a result of ribosome stalling. Its function is as follows. Catalyzes the release of premature peptidyl moieties from peptidyl-tRNA molecules trapped in stalled 50S ribosomal subunits, and thus maintains levels of free tRNAs and 50S ribosomes. The polypeptide is Peptidyl-tRNA hydrolase (Bifidobacterium animalis subsp. lactis (strain AD011)).